A 303-amino-acid chain; its full sequence is Ribosomal RNA small subunit methyltransferase A (303 aa).

Residues Asn-37, Val-39, Gly-64, Glu-85, Asp-115, and Asn-138 each contribute to the S-adenosyl-L-methionine site.

It belongs to the class I-like SAM-binding methyltransferase superfamily. rRNA adenine N(6)-methyltransferase family. RsmA subfamily.

Its subcellular location is the cytoplasm. The enzyme catalyses adenosine(1518)/adenosine(1519) in 16S rRNA + 4 S-adenosyl-L-methionine = N(6)-dimethyladenosine(1518)/N(6)-dimethyladenosine(1519) in 16S rRNA + 4 S-adenosyl-L-homocysteine + 4 H(+). In terms of biological role, specifically dimethylates two adjacent adenosines (A1518 and A1519) in the loop of a conserved hairpin near the 3'-end of 16S rRNA in the 30S particle. May play a critical role in biogenesis of 30S subunits. In Bifidobacterium adolescentis (strain ATCC 15703 / DSM 20083 / NCTC 11814 / E194a), this protein is Ribosomal RNA small subunit methyltransferase A.